Here is a 525-residue protein sequence, read N- to C-terminus: Glutamate--cysteine ligase (525 aa).

It belongs to the glutamate--cysteine ligase type 1 family. Type 1 subfamily.

It carries out the reaction L-cysteine + L-glutamate + ATP = gamma-L-glutamyl-L-cysteine + ADP + phosphate + H(+). It participates in sulfur metabolism; glutathione biosynthesis; glutathione from L-cysteine and L-glutamate: step 1/2. This is Glutamate--cysteine ligase from Pseudomonas putida (strain W619).